Here is a 599-residue protein sequence, read N- to C-terminus: Dictomallein-2 (599 aa).

The signal sequence occupies residues 1–20 (MKLILIYLILVFNLFNFINC). The Peptidase M66 domain maps to 145–407 (PDVGQDYTLK…QNYFKNSIYY (263 aa)). Residue His-298 participates in Zn(2+) binding. Glu-299 is a catalytic residue. Residues His-302 and His-308 each contribute to the Zn(2+) site.

It belongs to the dictomallein family. Requires Zn(2+) as cofactor.

It is found in the secreted. This chain is Dictomallein-2 (dtmlB), found in Dictyostelium discoideum (Social amoeba).